Here is a 291-residue protein sequence, read N- to C-terminus: Ribose-phosphate pyrophosphokinase (291 aa).

ATP is bound by residues 34–36 and 93–94; these read DGE and RQ. Mg(2+)-binding residues include His-127 and Asp-165. The active site involves Lys-188. D-ribose 5-phosphate contacts are provided by residues Arg-190, Asp-216, and 220-224; that span reads STGGT.

It belongs to the ribose-phosphate pyrophosphokinase family. Class III (archaeal) subfamily. In terms of assembly, homodimer. It depends on Mg(2+) as a cofactor.

It is found in the cytoplasm. It catalyses the reaction D-ribose 5-phosphate + ATP = 5-phospho-alpha-D-ribose 1-diphosphate + AMP + H(+). The protein operates within metabolic intermediate biosynthesis; 5-phospho-alpha-D-ribose 1-diphosphate biosynthesis; 5-phospho-alpha-D-ribose 1-diphosphate from D-ribose 5-phosphate (route I): step 1/1. Its function is as follows. Involved in the biosynthesis of the central metabolite phospho-alpha-D-ribosyl-1-pyrophosphate (PRPP) via the transfer of pyrophosphoryl group from ATP to 1-hydroxyl of ribose-5-phosphate (Rib-5-P). The sequence is that of Ribose-phosphate pyrophosphokinase from Saccharolobus solfataricus (strain ATCC 35092 / DSM 1617 / JCM 11322 / P2) (Sulfolobus solfataricus).